The chain runs to 138 residues: Endoribonuclease YbeY (138 aa).

Residues His-106, His-110, and Asp-116 each contribute to the Zn(2+) site.

It belongs to the endoribonuclease YbeY family. Zn(2+) is required as a cofactor.

It localises to the cytoplasm. Functionally, single strand-specific metallo-endoribonuclease involved in late-stage 70S ribosome quality control and in maturation of the 3' terminus of the 16S rRNA. The chain is Endoribonuclease YbeY from Phocaeicola vulgatus (strain ATCC 8482 / DSM 1447 / JCM 5826 / CCUG 4940 / NBRC 14291 / NCTC 11154) (Bacteroides vulgatus).